The primary structure comprises 82 residues: Sec-independent protein translocase protein TatA (82 aa).

A helical membrane pass occupies residues 1-21; sequence MGGISIWQLLIIAVIIVLLFG. The disordered stretch occupies residues 46–82; it reads DEPAKDAKKDADFVPQNLEKKEAETVEKQKQNDKEQA.

This sequence belongs to the TatA/E family. The Tat system comprises two distinct complexes: a TatABC complex, containing multiple copies of TatA, TatB and TatC subunits, and a separate TatA complex, containing only TatA subunits. Substrates initially bind to the TatABC complex, which probably triggers association of the separate TatA complex to form the active translocon.

It localises to the cell inner membrane. Functionally, part of the twin-arginine translocation (Tat) system that transports large folded proteins containing a characteristic twin-arginine motif in their signal peptide across membranes. TatA could form the protein-conducting channel of the Tat system. The chain is Sec-independent protein translocase protein TatA from Aliivibrio fischeri (strain MJ11) (Vibrio fischeri).